The following is a 270-amino-acid chain: NADPH-dependent aldehyde reductase-like protein, chloroplastic (270 aa).

The transit peptide at 1-53 (MSTHSSISQPPLPLAGRVAIVTGSSRGIGRAIAIHLAELGARIVINYTSKAAD) directs the protein to the chloroplast. 26-50 (RGIGRAIAIHLAELGARIVINYTSK) serves as a coordination point for NADP(+). S165 is a substrate binding site. The Proton acceptor role is filled by Y178.

Belongs to the short-chain dehydrogenases/reductases (SDR) family.

The protein localises to the plastid. The protein resides in the chloroplast. In terms of biological role, aldehyde reductase that catalyzes the reduction of the aldehyde carbonyl groups on saturated and alpha,beta-unsaturated aldehydes with more than 5 carbons. The sequence is that of NADPH-dependent aldehyde reductase-like protein, chloroplastic from Arabidopsis thaliana (Mouse-ear cress).